A 251-amino-acid polypeptide reads, in one-letter code: Triosephosphate isomerase (251 aa).

Residue 9–11 (NWK) coordinates substrate. His-95 serves as the catalytic Electrophile. The active-site Proton acceptor is the Glu-167. Substrate is bound by residues Gly-173, Ser-213, and 234-235 (GG). The residue at position 213 (Ser-213) is a Phosphoserine.

Belongs to the triosephosphate isomerase family. Homodimer.

The protein resides in the cytoplasm. It carries out the reaction D-glyceraldehyde 3-phosphate = dihydroxyacetone phosphate. The protein operates within carbohydrate biosynthesis; gluconeogenesis. It functions in the pathway carbohydrate degradation; glycolysis; D-glyceraldehyde 3-phosphate from glycerone phosphate: step 1/1. Its function is as follows. Involved in the gluconeogenesis. Catalyzes stereospecifically the conversion of dihydroxyacetone phosphate (DHAP) to D-glyceraldehyde-3-phosphate (G3P). This chain is Triosephosphate isomerase, found in Anoxybacillus flavithermus (strain DSM 21510 / WK1).